A 598-amino-acid chain; its full sequence is MALRCPIVSVLGHVDHGKTSLLDKIRRTRVTQREAGGITQHIGASEIPINTIKKVSKDLLGLFKADLSIPGILVIDTPGHEAFTSLRKRGGALADIAILVVDINEGFKPQTIEAINILKQCKTPFVVAANKVDRIPGWNSSEGPFILNFNEKNQHPNAMTEFEIRLYENVIKHLNELGFDADLFSRVKDTTKTINVVPVSAMTGEGIPDLLVIISGLAQKFLEQKLALNVEGYAKGTVLELKEEKGLGKTIDAIIYDGIAKTGDFLVVGNPDGVLVTKIKALLKPKELDEMRDPKDKFKPSKQISAATGVKISAPDLDNVIAGSPLRIVPKDQVDAAKEEVLQEVEEFTILTDDEGIIIKADTMGSLEALANELRKVKAKIKKAEVGDISKKEVIEASSYASTNPLNGLIISFNTKVLADAKVEIEKSDVKLLEGKIIYKLVEEYEDWIKEMEELLKSDEINRLTKPAMIKILPNCIFRQKEPAVCGVEVLYGTLKIGSPIMSEDGKKLGYVKEMRDNQQENIKEAKVGMQVPVSIDGNIVLSRNAKENDILYVEVPEPEARKLHHEFKDELRGDEKEALSRYMELKQKIENNIFWGM.

Residues 3 to 225 enclose the tr-type G domain; the sequence is LRCPIVSVLG…GLAQKFLEQK (223 aa). Residues 12–19 form a G1 region; sequence GHVDHGKT. Position 12-19 (12-19) interacts with GTP; that stretch reads GHVDHGKT. The segment at 37–41 is G2; the sequence is GITQH. The tract at residues 76–79 is G3; sequence DTPG. Residues 76–80 and 130–133 contribute to the GTP site; these read DTPGH and NKVD. Residues 130-133 are G4; it reads NKVD. The interval 200-202 is G5; the sequence is SAM.

It belongs to the TRAFAC class translation factor GTPase superfamily. Classic translation factor GTPase family. IF-2 subfamily.

Functionally, function in general translation initiation by promoting the binding of the formylmethionine-tRNA to ribosomes. Seems to function along with eIF-2. This is Probable translation initiation factor IF-2 from Methanococcus maripaludis (strain C7 / ATCC BAA-1331).